The sequence spans 272 residues: Phosphate import ATP-binding protein PstB (272 aa).

Residues 26–267 form the ABC transporter domain; it reads VAARNLNFYY…PADRRTQDYI (242 aa). 58 to 65 contacts ATP; sequence GPSGCGKS.

It belongs to the ABC transporter superfamily. Phosphate importer (TC 3.A.1.7) family. The complex is composed of two ATP-binding proteins (PstB), two transmembrane proteins (PstC and PstA) and a solute-binding protein (PstS).

The protein resides in the cell inner membrane. The catalysed reaction is phosphate(out) + ATP + H2O = ADP + 2 phosphate(in) + H(+). Its function is as follows. Part of the ABC transporter complex PstSACB involved in phosphate import. Responsible for energy coupling to the transport system. The sequence is that of Phosphate import ATP-binding protein PstB from Nitrobacter hamburgensis (strain DSM 10229 / NCIMB 13809 / X14).